The primary structure comprises 226 residues: MLLHIPAIFTAEEVSRIRAALEQAEWADGKATAGYQSAKAKHNLQLPQDHPLAREIGEAMLQRLWNHPLFMSAALPLKVFPPLFNCYTGGGSFDFHIDNAVRDIHGGRERVRTDLSSTLFFSDPEDYDGGELVIQDTYGLQQVKLPAGDLVLYPGTSLHKVNPVTRGARYASFFWTQSLVREDSQRTLLFEMDQSIQRLTRDVPDHPSLIRLTGTYHNLLRRWSEL.

One can recognise a Fe2OG dioxygenase domain in the interval 78–178 (KVFPPLFNCY…RYASFFWTQS (101 aa)). Fe cation is bound by residues H96, D98, and H159. R169 contributes to the 2-oxoglutarate binding site.

The cofactor is Fe(2+). L-ascorbate is required as a cofactor.

This chain is PKHD-type hydroxylase PLES_48951, found in Pseudomonas aeruginosa (strain LESB58).